The following is a 98-amino-acid chain: Aspartyl/glutamyl-tRNA(Asn/Gln) amidotransferase subunit C (98 aa).

The interval 70 to 98 (PSLTPEQALSGAPAQEQQRFKVPQILGED) is disordered.

This sequence belongs to the GatC family. In terms of assembly, heterotrimer of A, B and C subunits.

It carries out the reaction L-glutamyl-tRNA(Gln) + L-glutamine + ATP + H2O = L-glutaminyl-tRNA(Gln) + L-glutamate + ADP + phosphate + H(+). It catalyses the reaction L-aspartyl-tRNA(Asn) + L-glutamine + ATP + H2O = L-asparaginyl-tRNA(Asn) + L-glutamate + ADP + phosphate + 2 H(+). Allows the formation of correctly charged Asn-tRNA(Asn) or Gln-tRNA(Gln) through the transamidation of misacylated Asp-tRNA(Asn) or Glu-tRNA(Gln) in organisms which lack either or both of asparaginyl-tRNA or glutaminyl-tRNA synthetases. The reaction takes place in the presence of glutamine and ATP through an activated phospho-Asp-tRNA(Asn) or phospho-Glu-tRNA(Gln). The polypeptide is Aspartyl/glutamyl-tRNA(Asn/Gln) amidotransferase subunit C (Streptomyces avermitilis (strain ATCC 31267 / DSM 46492 / JCM 5070 / NBRC 14893 / NCIMB 12804 / NRRL 8165 / MA-4680)).